Consider the following 102-residue polypeptide: Small ribosomal subunit protein uS10 (102 aa).

It belongs to the universal ribosomal protein uS10 family. In terms of assembly, part of the 30S ribosomal subunit.

Functionally, involved in the binding of tRNA to the ribosomes. The polypeptide is Small ribosomal subunit protein uS10 (Thiobacillus denitrificans (strain ATCC 25259 / T1)).